A 483-amino-acid chain; its full sequence is UDP-N-acetylmuramoyl-L-alanyl-D-glutamate--2,6-diaminopimelate ligase 2 (483 aa).

Serine 30 serves as a coordination point for UDP-N-acetyl-alpha-D-muramoyl-L-alanyl-D-glutamate. Residue glycine 111–threonine 117 participates in ATP binding. UDP-N-acetyl-alpha-D-muramoyl-L-alanyl-D-glutamate-binding positions include threonine 156–threonine 157, threonine 183, and arginine 191. Lysine 223 carries the post-translational modification N6-carboxylysine. Residues arginine 380, aspartate 404–arginine 407, glycine 456, and glutamate 460 each bind meso-2,6-diaminopimelate. The Meso-diaminopimelate recognition motif motif lies at aspartate 404–arginine 407.

The protein belongs to the MurCDEF family. MurE subfamily. Mg(2+) is required as a cofactor. Post-translationally, carboxylation is probably crucial for Mg(2+) binding and, consequently, for the gamma-phosphate positioning of ATP.

It is found in the cytoplasm. It carries out the reaction UDP-N-acetyl-alpha-D-muramoyl-L-alanyl-D-glutamate + meso-2,6-diaminopimelate + ATP = UDP-N-acetyl-alpha-D-muramoyl-L-alanyl-gamma-D-glutamyl-meso-2,6-diaminopimelate + ADP + phosphate + H(+). It participates in cell wall biogenesis; peptidoglycan biosynthesis. Functionally, catalyzes the addition of meso-diaminopimelic acid to the nucleotide precursor UDP-N-acetylmuramoyl-L-alanyl-D-glutamate (UMAG) in the biosynthesis of bacterial cell-wall peptidoglycan. The sequence is that of UDP-N-acetylmuramoyl-L-alanyl-D-glutamate--2,6-diaminopimelate ligase 2 from Clostridium acetobutylicum (strain ATCC 824 / DSM 792 / JCM 1419 / IAM 19013 / LMG 5710 / NBRC 13948 / NRRL B-527 / VKM B-1787 / 2291 / W).